The sequence spans 1515 residues: Metal resistance protein YCF1 (1515 aa).

The Vacuolar portion of the chain corresponds to 1–32 (MAGNLVSWACKLCRSPEGFGPISFYGDFTQCF). The helical transmembrane segment at 33-53 (IDGVILNLSAIFMITFGIRDL) threads the bilayer. Residues 54–73 (VNLCKKKHSGIKYRRNWIIV) lie on the Cytoplasmic side of the membrane. Residues 74 to 94 (SRMALVLLEIAFVSLASLNIS) form a helical membrane-spanning segment. Over 95 to 99 (KEEAE) the chain is Vacuolar. Residues 100–120 (NFTIVSQYASTMLSLFVALAL) form a helical membrane-spanning segment. Residues 121 to 130 (HWIEYDRSVV) are Cytoplasmic-facing. A helical transmembrane segment spans residues 131–151 (ANTVLLFYWLFETFGNFAKLI). At 152 to 169 (NILIRHTYEGIWYSGQTG) the chain is on the vacuolar side. A helical transmembrane segment spans residues 170 to 190 (FILTLFQVITCASILLLEALP). The Cytoplasmic segment spans residues 191 to 278 (KKPLMPHQHI…QKSNPSLSWA (88 aa)). The residue at position 251 (S251) is a Phosphoserine. A helical membrane pass occupies residues 279–299 (ICRTFGSKMLLAAFFKAIHDV). Positions 287 to 590 (MLLAAFFKAI…IPMVLNSFIE (304 aa)) constitute an ABC transmembrane type-1 1 domain. Topologically, residues 300–345 (LAFTQPQLLRILIKFVTDYNSERQDDHSSLQGFENNHPQKLPIVRG) are vacuolar. The helical transmembrane segment at 346-366 (FLIAFAMFLVGFTQTSVLHQY) threads the bilayer. At 367-422 (FLNVFNTGMYIKSALTALIYQKSLVLSNEASGLSSTGDIVNLMSVDVQKLQDLTQW) the chain is on the cytoplasmic side. The helical transmembrane segment at 423-443 (LNLIWSGPFQIIICLYSLYKL) threads the bilayer. Residues 444-446 (LGN) lie on the Vacuolar side of the membrane. Residues 447 to 467 (SMWVGVIILVIMMPLNSFLMR) form a helical membrane-spanning segment. Topologically, residues 468–530 (IQKKLQKSQM…NLTKLGCYMA (63 aa)) are cytoplasmic. Residues 531-551 (VTSFQFNIVPFLVSCCTFAVF) form a helical membrane-spanning segment. The Vacuolar portion of the chain corresponds to 552–572 (VYTEDRALTTDLVFPALTLFN). Residues 573–593 (LLSFPLMIIPMVLNSFIEASV) form a helical membrane-spanning segment. Topologically, residues 594–943 (SIGRLFTFFT…VKWNIYLEYA (350 aa)) are cytoplasmic. The ABC transporter 1 domain occupies 626 to 853 (INIGDDATFL…ADSPLWKLLN (228 aa)). 663–670 (GKVGSGKT) provides a ligand contact to ATP. 3 positions are modified to phosphoserine: S873, S903, and S908. A Phosphothreonine modification is found at T911. The residue at position 914 (S914) is a Phosphoserine. A helical transmembrane segment spans residues 944–964 (KACNPKSVCVFILFIVISMFL). Positions 951-1235 (VCVFILFIVI…IVRMTVEVET (285 aa)) constitute an ABC transmembrane type-1 2 domain. The Vacuolar portion of the chain corresponds to 965–1001 (SVMGNVWLKHWSEVNSRYGSNPNAARYLAIYFALGIG). A helical membrane pass occupies residues 1002 to 1023 (SALATLIQTIVLWVFCTIHASK). The Cytoplasmic segment spans residues 1024 to 1066 (YLHNLMTNSVLRAPMTFFETTPIGRILNRFSNDIYKVDALLGR). The chain crosses the membrane as a helical span at residues 1067–1087 (TFSQFFVNAVKVTFTITVICA). T1088 is a topological domain (vacuolar). Residues 1089 to 1109 (TWQFIFIIIPLSVFYIYYQQY) traverse the membrane as a helical segment. The Cytoplasmic segment spans residues 1110 to 1180 (YLRTSRELRR…NANRWLAYRL (71 aa)). The helical transmembrane segment at 1181–1201 (ELIGSIIILGAATLSVFRLKQ) threads the bilayer. Residues 1202 to 1205 (GTLT) are Vacuolar-facing. The chain crosses the membrane as a helical span at residues 1206 to 1226 (AGMVGLSLSYALQITQTLNWI). Over 1227–1515 (VRMTVEVETN…CMEAGLVNEN (289 aa)) the chain is Cytoplasmic. The region spanning 1272–1507 (IKFNNYSTRY…NKSLFYSLCM (236 aa)) is the ABC transporter 2 domain. Residue 1306–1313 (GRTGAGKS) coordinates ATP.

Belongs to the ABC transporter superfamily. ABCC family. Conjugate transporter (TC 3.A.1.208) subfamily.

It is found in the vacuole membrane. It catalyses the reaction Cd(2+)(in) + ATP + H2O = Cd(2+)(out) + ADP + phosphate + H(+). It carries out the reaction an S-substituted glutathione(in) + ATP + H2O = an S-substituted glutathione(out) + ADP + phosphate + H(+). Its function is as follows. Cooperates for the ATP-dependent vacuolar transport of bilirubin and glutathione conjugates. This Saccharomyces cerevisiae (strain ATCC 204508 / S288c) (Baker's yeast) protein is Metal resistance protein YCF1 (YCF1).